The chain runs to 460 residues: Cysteine--tRNA ligase (460 aa).

Cys28 provides a ligand contact to Zn(2+). The short motif at 30 to 40 (VTIYDLCHIGH) is the 'HIGH' region element. 3 residues coordinate Zn(2+): Cys209, His234, and Glu238. Residues 266-270 (KMSKS) carry the 'KMSKS' region motif. Lys269 serves as a coordination point for ATP.

This sequence belongs to the class-I aminoacyl-tRNA synthetase family. As to quaternary structure, monomer. Zn(2+) serves as cofactor.

It is found in the cytoplasm. It carries out the reaction tRNA(Cys) + L-cysteine + ATP = L-cysteinyl-tRNA(Cys) + AMP + diphosphate. The sequence is that of Cysteine--tRNA ligase from Vibrio parahaemolyticus serotype O3:K6 (strain RIMD 2210633).